Consider the following 362-residue polypeptide: Hepatic sodium/bile acid cotransporter (362 aa).

The Extracellular segment spans residues 1-22 (MEVHNVSAPFNFSLPPGFGHRA). 2 N-linked (GlcNAc...) asparagine glycosylation sites follow: N5 and N11. The helical transmembrane segment at 23–44 (TDKALSIILVLMLLLIMLSLGC) threads the bilayer. At 45 to 47 (TME) the chain is on the cytoplasmic side. The chain crosses the membrane as a helical span at residues 48 to 83 (FSKIKAHLWKPKGVIVALVAQFGIMPLAAFLLGKIF). The Extracellular portion of the chain corresponds to 84-86 (HLS). A discontinuously helical transmembrane segment spans residues 87–112 (NIEALAILICGCSPGGNLSNLFTLAM). The Cytoplasmic portion of the chain corresponds to 113 to 115 (KGD). Residues 116–142 (MNLSIVMTTCSSFSALGMMPLLLYVYS) traverse the membrane as a helical segment. At 143-156 (KGIYDGDLKDKVPY) the chain is on the extracellular side. A helical membrane pass occupies residues 157 to 179 (KGIMISLVIVLIPCTIGIVLKSK). Residues 180–183 (RPHY) are Cytoplasmic-facing. The helical transmembrane segment at 184–217 (VPYILKGGMIITFLLSVAVTALSVINVGNSIMFV) threads the bilayer. Residues 218–219 (MT) lie on the Extracellular side of the membrane. Residues 220 to 243 (PHLLATSSLMPFSGFLMGYILSAL) traverse the membrane as a helical segment. At 244–247 (FQLN) the chain is on the cytoplasmic side. Residues 248–273 (PSCRRTISMETGFQNIQLCSTILNVT) traverse the membrane as a discontinuously helical segment. The Extracellular segment spans residues 274–280 (FPPEVIG). The chain crosses the membrane as a helical span at residues 281 to 311 (PLFFFPLLYMIFQLAEGLLIIIIFRCYEKIK). Residues 312-362 (PPKDQTKITYKAAATEDATPAALEKGTHNGNIPPLQPGPSPNGLNSGQMAN) are Cytoplasmic-facing. T330 is modified (phosphothreonine). Residues 333–362 (ALEKGTHNGNIPPLQPGPSPNGLNSGQMAN) are disordered. Polar residues predominate over residues 353-362 (NGLNSGQMAN).

Belongs to the bile acid:sodium symporter (BASS) (TC 2.A.28) family. Highly expressed in liver and low expression in kidney.

The protein localises to the cell membrane. The enzyme catalyses taurocholate(out) + 2 Na(+)(out) = taurocholate(in) + 2 Na(+)(in). The catalysed reaction is taurochenodeoxycholate(out) + 2 Na(+)(out) = taurochenodeoxycholate(in) + 2 Na(+)(in). It catalyses the reaction tauroursodeoxycholate(out) + 2 Na(+)(out) = tauroursodeoxycholate(in) + 2 Na(+)(in). It carries out the reaction glycocholate(out) + 2 Na(+)(out) = glycocholate(in) + 2 Na(+)(in). The enzyme catalyses estrone 3-sulfate(out) + 2 Na(+)(out) = estrone 3-sulfate(in) + 2 Na(+)(in). The catalysed reaction is cholate(out) + 2 Na(+)(out) = cholate(in) + 2 Na(+)(in). It catalyses the reaction tauronorcholate(out) + 2 Na(+)(out) = tauronorcholate(in) + 2 Na(+)(in). It carries out the reaction taurodeoxycholate(out) + 2 Na(+)(out) = taurodeoxycholate(in) + 2 Na(+)(in). The enzyme catalyses tauroallocholate(out) + 2 Na(+)(out) = tauroallocholate(in) + 2 Na(+)(in). The catalysed reaction is taurohyodeoxycholate(out) + 2 Na(+)(out) = taurohyodeoxycholate(in) + 2 Na(+)(in). It catalyses the reaction taurohyocholate(out) + 2 Na(+)(out) = taurohyocholate(in) + 2 Na(+)(in). It carries out the reaction tauro-beta-muricholate(out) + 2 Na(+)(out) = tauro-beta-muricholate(in) + 2 Na(+)(in). The transport of bile acids is sodium-dependent. Its function is as follows. As a major transporter of conjugated bile salts from plasma into the hepatocyte, it plays a key role in the enterohepatic circulation of bile salts necessary for the solubilization and absorption of dietary fat and fat-soluble vitamins. It is strictly dependent on the extracellular presence of sodium. It exhibits broad substrate specificity and transports various bile acids, such as taurocholate, cholate, as well as non-bile acid organic compounds, such as estrone sulfate. Works collaboratively with the ileal transporter (NTCP2), the organic solute transporter (OST), and the bile salt export pump (BSEP), to ensure efficacious biological recycling of bile acids during enterohepatic circulation. The polypeptide is Hepatic sodium/bile acid cotransporter (Slc10a1) (Rattus norvegicus (Rat)).